Reading from the N-terminus, the 336-residue chain is MIEADRLISAGTTLPEDVADRAIRPKLLEEYVGQPQVRSQMEIFIKAAKLRGDALDHLLIFGPPGLGKTTLANIVANEMGVNLRTTSGPVLEKAGDLAAMLTNLEPHDVLFIDEIHRLSPVVEEVLYPAMEDYQLDIMIGEGPAARSIKIDLPPFTLIGATTRAGSLTSPLRDRFGIVQRLEFYQVPDLQYIVSRSARFMGLEMSDDGALEVARRARGTPRIANRLLRRVRDFAEVKHDGTISADIAAQALDMLNVDAEGFDYMDRKLLLAVIDKFFGGPVGLDNLAAAIGEERETIEDVLEPYLIQQGFLQRTPRGRMATVRAWNHFGITPPEMP.

The segment at 4–184 is large ATPase domain (RuvB-L); sequence ADRLISAGTT…FGIVQRLEFY (181 aa). Residues I23, R24, G65, K68, T69, T70, 131-133, R174, Y184, and R221 each bind ATP; that span reads EDY. Mg(2+) is bound at residue T69. Positions 185–255 are small ATPAse domain (RuvB-S); that stretch reads QVPDLQYIVS…IAAQALDMLN (71 aa). Positions 258-336 are head domain (RuvB-H); it reads AEGFDYMDRK…HFGITPPEMP (79 aa). DNA-binding residues include R294, R313, and R318.

This sequence belongs to the RuvB family. Homohexamer. Forms an RuvA(8)-RuvB(12)-Holliday junction (HJ) complex. HJ DNA is sandwiched between 2 RuvA tetramers; dsDNA enters through RuvA and exits via RuvB. An RuvB hexamer assembles on each DNA strand where it exits the tetramer. Each RuvB hexamer is contacted by two RuvA subunits (via domain III) on 2 adjacent RuvB subunits; this complex drives branch migration. In the full resolvosome a probable DNA-RuvA(4)-RuvB(12)-RuvC(2) complex forms which resolves the HJ.

It localises to the cytoplasm. It carries out the reaction ATP + H2O = ADP + phosphate + H(+). Functionally, the RuvA-RuvB-RuvC complex processes Holliday junction (HJ) DNA during genetic recombination and DNA repair, while the RuvA-RuvB complex plays an important role in the rescue of blocked DNA replication forks via replication fork reversal (RFR). RuvA specifically binds to HJ cruciform DNA, conferring on it an open structure. The RuvB hexamer acts as an ATP-dependent pump, pulling dsDNA into and through the RuvAB complex. RuvB forms 2 homohexamers on either side of HJ DNA bound by 1 or 2 RuvA tetramers; 4 subunits per hexamer contact DNA at a time. Coordinated motions by a converter formed by DNA-disengaged RuvB subunits stimulates ATP hydrolysis and nucleotide exchange. Immobilization of the converter enables RuvB to convert the ATP-contained energy into a lever motion, pulling 2 nucleotides of DNA out of the RuvA tetramer per ATP hydrolyzed, thus driving DNA branch migration. The RuvB motors rotate together with the DNA substrate, which together with the progressing nucleotide cycle form the mechanistic basis for DNA recombination by continuous HJ branch migration. Branch migration allows RuvC to scan DNA until it finds its consensus sequence, where it cleaves and resolves cruciform DNA. This chain is Holliday junction branch migration complex subunit RuvB, found in Escherichia coli O17:K52:H18 (strain UMN026 / ExPEC).